Consider the following 1058-residue polypeptide: MIKEITAKYNAEQIEKKITQLWKDSDAYRKTREHRKTGKRLFFVDGPPYTTGHIHLGTAWNKIIKDSILRYYSMNNRNILERPGWDMHGLPIEVKVEGVLGFKSKKDIESFGVENFIEKCKEFAINQKQEMTEQFQRLGVWMQWEAPYMTLKDDYIEAAWWTLKQASEKNLLDVGKRSVNWCPRCETAIADSEVEYAERTDPSIYVKFKIKGEENTFIVIWTTTPWTIPANVAVAVHPGFEYSKFRAIRQDGSDEILIAATDLIENVLRQGRYVDYEVLETMLGEDLTKLEYESPVGDLVPVQNEIKHGIYLADYVTAENTGCVHIAPGHGMDDFNVGVKYNLPILCPVGPNGAYTEEAGEYAGKNVREANPIVIEDLRKRNRLLAEGTVTHRYGHCWRCKTPIIYLATEQWFLKVTDIKDKMLEAIDAVDWYPEWAGSARFRTWVEGARDWCISRQRYWGMPIPVWKCKKCGKLEVIGTKAELLEKSGAGSDVELHRPYVDKLTIPCECGGEKKRVEDVFDVWFDSAVASWATLKFPQTREQFDEWWPADFITEGHDQTRGWFYSQLGASMVGFGRAPYKSVLMHGFTLDAGGKKMSKSLGNVVSPIDVIDKYGADTLRAYVLSSSAPWDDLKFNQEEVENVHRSINILWNVFRFPLPYMALDNFDPLKVSLDSVKDALREEDRWILSRIQSVVKAVDEAMSGYFLHKAVREILEFTLEDLSRWYIQLIRPRTWTEADDPDKLAAYRVLYEVYVTLTKLISPFMPYLAEEMYQNLIRNVDPNALESVHMCDWPKVNEAYLDPELEAAMSTARSIVEAASNARQKAGRKLRWPVSRIVVSPESEDAAKAVERLRSVLMDQTNSKAIVLTPVGESWDELGLEVIPDPSKIGPVFKKDAGKVIPALQKVDGFALKKAFAEAGEFELSLADRTTVTVTPGMANFKETLPEGTASAESDAGLVYVDANLTPELEAEGYAREVIRRLQDMRKELDLVVDENIRVSVRIEDERVLRLVETLKDLIAEEVRAEILNLGSDIDVSGALVKDWDVEGIAMKMGISKK.

The short motif at P48–T58 is the 'HIGH' region element. The 'KMSKS' region signature appears at K596–S600. An ATP-binding site is contributed by K599.

It belongs to the class-I aminoacyl-tRNA synthetase family. IleS type 2 subfamily. As to quaternary structure, monomer. Zn(2+) is required as a cofactor.

It is found in the cytoplasm. It catalyses the reaction tRNA(Ile) + L-isoleucine + ATP = L-isoleucyl-tRNA(Ile) + AMP + diphosphate. Its function is as follows. Catalyzes the attachment of isoleucine to tRNA(Ile). As IleRS can inadvertently accommodate and process structurally similar amino acids such as valine, to avoid such errors it has two additional distinct tRNA(Ile)-dependent editing activities. One activity is designated as 'pretransfer' editing and involves the hydrolysis of activated Val-AMP. The other activity is designated 'posttransfer' editing and involves deacylation of mischarged Val-tRNA(Ile). This chain is Isoleucine--tRNA ligase, found in Methanosarcina barkeri (strain Fusaro / DSM 804).